The following is a 538-amino-acid chain: CWF19-like protein 1 (538 aa).

A disordered region spans residues 298 to 324 (QGRKRSSTGRDSKSSPHPKQPRKPPQP).

It belongs to the CWF19 family. As to expression, expressed in many brain regions, including cerebellum, thalamus and occipital, parietal and temporal lobes (at protein level). Also expressed in the spinal cord (at protein level).

This chain is CWF19-like protein 1 (CWF19L1), found in Homo sapiens (Human).